The chain runs to 1290 residues: Sorbin and SH3 domain-containing protein 1 (1290 aa).

Disordered stretches follow at residues 1-211 (MSSE…LSDV), 238-271 (HKLN…SKSE), and 286-313 (TLPL…KKVD). Over residues 45-61 (SSSYRGTPSSSPVSPQE) the composition is skewed to low complexity. Thr51 carries the phosphothreonine modification. Ser55, Ser58, and Ser62 each carry phosphoserine. Positions 62-71 (SPKHESKSGL) are enriched in basic and acidic residues. Polar residues-rich tracts occupy residues 83–95 (LSSS…NAQP) and 123–153 (EVSS…TIVN). Over residues 161–173 (HNRDPASERRAGE) the composition is skewed to basic and acidic residues. Asp164 and Asp175 each carry phosphoserine. Thr179 is subject to Phosphothreonine. Residues Ser185, Ala194, Ser204, Ser209, Ser254, Ser261, Ser270, and Pro288 each carry the phosphoserine modification. A compositionally biased stretch (basic and acidic residues) spans 189–199 (ASERRAKDASR). The SoHo domain maps to 202–247 (VRSAQDLSDVSTDEVGIPLRNTERSKDWYKTMFKQIHKLNRDDDSD). A compositionally biased stretch (basic and acidic residues) spans 240-260 (LNRDDDSDVHSPRYSFSDDTK). Basic and acidic residues predominate over residues 299–313 (SPERNDWEPLDKKVD). Position 325 is a phosphotyrosine; by ABL1 (Tyr325). A phosphoserine mark is found at Ser345, Pro346, Tyr357, Ser376, and Ser407. The tract at residues 389 to 416 (VETVNKSPSANSPQSSAVSPTPDITSEP) is disordered. The span at 392–412 (VNKSPSANSPQSSAVSPTPDI) shows a compositional bias: polar residues. Tyr421 bears the Phosphotyrosine; by ABL1 mark. Phosphoserine occurs at positions 432 and 470. 6 disordered regions span residues 463–482 (LSGL…RKGG), 588–607 (YDSK…SSRR), 697–739 (SLDF…EMDG), 783–803 (VSND…PKHR), 822–841 (RKHE…SRGD), and 862–972 (PLQQ…SPRH). Thr475 bears the Phosphothreonine mark. Polar residues-rich tracts occupy residues 595–606 (TMSLQEYGTSSR) and 704–722 (LSKS…SARS). The residue at position 969 (Ser969) is a Phosphoserine. SH3 domains are found at residues 1049-1108 (LEMR…LLPP) and 1123-1184 (LEYG…VLKR). Thr1189 bears the Phosphothreonine mark. 2 positions are modified to phosphotyrosine: Tyr1193 and Tyr1198. The span at 1198–1210 (YSSSPSRSATVSP) shows a compositional bias: low complexity. The interval 1198-1227 (YSSSPSRSATVSPQQPQAQQRRVTPDRSQP) is disordered. Residues Ser1201 and Ser1209 each carry the phosphoserine modification. Over residues 1211-1227 (QQPQAQQRRVTPDRSQP) the composition is skewed to polar residues. Residues 1229 to 1290 (LDLCSYQALY…PGNYVKPLYL (62 aa)) form the SH3 3 domain. The residue at position 1238 (Tyr1238) is a Phosphotyrosine; by ABL1.

In terms of assembly, interacts (via SH3 domain 2) with PXN. Interacts with the long isoform of AFDN and with VCL. AFDN and VCL bind to SORBS1 in a competitive manner and do not form a ternary complex. Interacts with ABL1, CBL, CBLB and INPPL1/SHIP2 through the third SH3 domain. Interaction with ABL1 occurs only after insulin stimulation while this has no effect on the interaction with INPPL1. Interacts with the insulin receptor but dissociates from it following insulin stimulation. Also interacts with SCA7, PTK2/FAK1 and flotillin. Interacts (via third SH3 domain) with the Ten-1 ICD form of TENM1; the interaction induces the translocation of SORBS1 to the nucleus. Interacts with INSM1. In terms of processing, O-glycosylated. Expressed in all tissues tested: heart, brain, spleen, lung, liver, muscle, kidney and testis. Expressed in 3T3-L1 adipocytes but not in 3T3-L1 fibroblasts.

It localises to the cell junction. Its subcellular location is the adherens junction. The protein localises to the cell membrane. It is found in the cytoplasm. The protein resides in the cytoskeleton. It localises to the focal adhesion. Its subcellular location is the nucleus. The protein localises to the nucleus matrix. Functionally, plays a role in tyrosine phosphorylation of CBL by linking CBL to the insulin receptor. Required for insulin-stimulated glucose transport. Involved in formation of actin stress fibers and focal adhesions. The chain is Sorbin and SH3 domain-containing protein 1 from Mus musculus (Mouse).